The following is a 108-amino-acid chain: Immunoglobulin kappa variable 11-125 (108 aa).

The framework-1 stretch occupies residues 1-23 (DVQMIQSPSSLSASLGDIVTMTC). Cys23 and Cys88 form a disulfide bridge. A complementarity-determining-1 region spans residues 24–34 (QASQGTSINLN). Residues 35 to 49 (WFQQKPGKAPKLLIY) are framework-2. Positions 50-56 (GASILED) are complementarity-determining-2. Positions 57-88 (GVPSRFSGSRYGTDFTLTISSLEDEDMATYFC) are framework-3. Residues 89–97 (LQHSYLPYT) form a complementarity-determining-3 region. Residues 98-108 (FGGGTKLEIKR) are framework-4.

The polypeptide is Immunoglobulin kappa variable 11-125 (Mus musculus (Mouse)).